A 244-amino-acid chain; its full sequence is Centromere protein H (244 aa).

N-acetylmethionine is present on methionine 1. A disordered region spans residues 1–33; the sequence is METQSEEQAVTKPADSGGEGGPPQVAGAQAARP. Serine 16 carries the phosphoserine modification. Residues 22-31 are compositionally biased toward low complexity; sequence PPQVAGAQAA. Residue lysine 64 forms a Glycyl lysine isopeptide (Lys-Gly) (interchain with G-Cter in SUMO2) linkage. Phosphothreonine is present on threonine 65. 2 coiled-coil regions span residues 66-104 and 146-189; these read PEQIMQEKQIEAKIEELENEVEEAKTAFEMKKLALDRMQ and DLEE…MENS.

The protein belongs to the CENP-H/MCM16 family. Self-associates. Component of the CENPA-NAC complex, at least composed of CENPA, CENPC, CENPH, CENPM, CENPN, CENPT and CENPU. The CENPA-NAC complex interacts with the CENPA-CAD complex, composed of CENPI, CENPK, CENPL, CENPO, CENPP, CENPQ, CENPR and CENPS. Interacts with KIF2C and NDC80.

Its subcellular location is the nucleus. The protein resides in the chromosome. It localises to the centromere. It is found in the kinetochore. Functionally, component of the CENPA-NAC (nucleosome-associated) complex, a complex that plays a central role in assembly of kinetochore proteins, mitotic progression and chromosome segregation. The CENPA-NAC complex recruits the CENPA-CAD (nucleosome distal) complex and may be involved in incorporation of newly synthesized CENPA into centromeres. This Bos taurus (Bovine) protein is Centromere protein H (CENPH).